A 92-amino-acid chain; its full sequence is RQC P-site tRNA stabilizing factor (92 aa).

The S4 RNA-binding domain occupies Met5–Glu65.

The protein belongs to the RqcP family. In terms of assembly, associates with stalled 50S ribosomal subunits. Binds to RqcH, 23S rRNA and the P-site tRNA. Does not require RqcH for association with 50S subunits.

Key component of the ribosome quality control system (RQC), a ribosome-associated complex that mediates the extraction of incompletely synthesized nascent chains from stalled ribosomes and their subsequent degradation. RqcH recruits Ala-charged tRNA, and with RqcP directs the elongation of stalled nascent chains on 50S ribosomal subunits, leading to non-templated C-terminal alanine extensions (Ala tail). The Ala tail promotes nascent chain degradation. RqcP is associated with the translocation-like movement of the peptidyl-tRNA from the A-site into the P-site. The chain is RQC P-site tRNA stabilizing factor from Listeria monocytogenes serovar 1/2a (strain ATCC BAA-679 / EGD-e).